The primary structure comprises 205 residues: Large ribosomal subunit protein uL4 (205 aa).

A disordered region spans residues 43–77 (RRRSGTASTKGRSDVAGSRAKLFRQKGTGRARRGD). Basic residues predominate over residues 63-73 (KLFRQKGTGRA).

This sequence belongs to the universal ribosomal protein uL4 family. In terms of assembly, part of the 50S ribosomal subunit.

One of the primary rRNA binding proteins, this protein initially binds near the 5'-end of the 23S rRNA. It is important during the early stages of 50S assembly. It makes multiple contacts with different domains of the 23S rRNA in the assembled 50S subunit and ribosome. In terms of biological role, forms part of the polypeptide exit tunnel. The chain is Large ribosomal subunit protein uL4 from Desulfosudis oleivorans (strain DSM 6200 / JCM 39069 / Hxd3) (Desulfococcus oleovorans).